Here is a 279-residue protein sequence, read N- to C-terminus: Probable flavonol synthase 4 (279 aa).

Residues 1-25 are disordered; the sequence is MEVERDQHKPPLSLQNNKIPSSQNF. Residues 13–25 show a composition bias toward polar residues; it reads SLQNNKIPSSQNF. Positions 156-256 constitute a Fe2OG dioxygenase domain; sequence GAGYLMKINY…RMSSVVHIKP (101 aa). 164–166 provides a ligand contact to 2-oxoglutarate; it reads NYY. Fe cation-binding residues include H181, D183, and H237. 2-oxoglutarate is bound at residue 247-249; the sequence is RMS.

The protein belongs to the iron/ascorbate-dependent oxidoreductase family. Fe(2+) is required as a cofactor.

It carries out the reaction a (2R,3R)-dihydroflavonol + 2-oxoglutarate + O2 = a flavonol + succinate + CO2 + H2O. It participates in secondary metabolite biosynthesis; flavonoid biosynthesis. The sequence is that of Probable flavonol synthase 4 (FLS4) from Arabidopsis thaliana (Mouse-ear cress).